We begin with the raw amino-acid sequence, 31 residues long: Photosystem II reaction center protein T (31 aa).

A helical membrane pass occupies residues 3–23 (ALVYTFLLVGTLGIIFFSIFF).

The protein belongs to the PsbT family. In terms of assembly, PSII is composed of 1 copy each of membrane proteins PsbA, PsbB, PsbC, PsbD, PsbE, PsbF, PsbH, PsbI, PsbJ, PsbK, PsbL, PsbM, PsbT, PsbY, PsbZ, Psb30/Ycf12, at least 3 peripheral proteins of the oxygen-evolving complex and a large number of cofactors. It forms dimeric complexes.

The protein localises to the plastid. It localises to the chloroplast thylakoid membrane. Functionally, found at the monomer-monomer interface of the photosystem II (PS II) dimer, plays a role in assembly and dimerization of PSII. PSII is a light-driven water plastoquinone oxidoreductase, using light energy to abstract electrons from H(2)O, generating a proton gradient subsequently used for ATP formation. The sequence is that of Photosystem II reaction center protein T from Tupiella akineta (Green alga).